The sequence spans 184 residues: MDLTQFNTAGIVWLTVAAIAISYILQSSFLSWYRLRHIPGPFLASISSLWNVLNIVTGRTSPVLEKLPGRYGPLVRTGPNYVLTDDAEILRHVNGVRSTYPRNGWYEGFRVDEYDHMGSHIDTSVHDAIKSKVIGGYNGKDGIDLEGAIGSQVKTLVSEIRRTRGSRPRSRPRWMPARWSRSSP.

The helical transmembrane segment at 10-30 (GIVWLTVAAIAISYILQSSFL) threads the bilayer. The disordered stretch occupies residues 161–184 (RRTRGSRPRSRPRWMPARWSRSSP). A compositionally biased stretch (basic residues) spans 163–172 (TRGSRPRSRP). Over residues 173-184 (RWMPARWSRSSP) the composition is skewed to low complexity.

This sequence belongs to the cytochrome P450 family.

It localises to the membrane. Cytochrome P450 monooxygenase; part of the gene cluster that mediates the biosynthesis of loline alkaloids, potent insecticidal agents composed of a pyrrolizidine ring system and an uncommon ether bridge linking carbons 2 and 7. Lolines are structurally differentiated by the various modifications of the L-amino group and include norloline, loline, N-methylloline, N-acetylloline, N-acetylnorloline, and N-formylloline. The first committed step is the condensation of O-acetyl-L-homoserine (derived from L-aspartic acid) and L-proline, probably catalyzed by the gamma-type pyridoxal 5'-phosphate(PLP)-dependent enzyme lolC, to give the diamino diacid, NACPP. Ensuing cyclization, decarboxylation, and acetylation steps yield 1-exo-acetamidopyrrolizidine (AcAP). LolO is required for installation of the ether bridge upon the pathway intermediate, 1-exo-acetamidopyrrolizidine (AcAP). In sequential 2-oxoglutarate- and O(2)-consuming steps, lolO removes hydrogens from C2 and C7 of AcAP to form both carbon-oxygen bonds in N-acetylnorloline (NANL), the precursor to all other lolines. The enzymes lolD, lolE, lolF and lolT have also been proposed to be involved in the ether-bridge installation. Further processing of the exocyclic moiety of NANL by fungal N-acetamidase (LolN), methyltransferase (LolM), and cytochrome P450 (LolP) enzymes, with occasional involvement of a plant acetyltransferase, generates the other known lolines. LolN transforms NANL to norlonine which is monomethylated and dimethylated to respectively lonine and N-methyllonine (NML) by lolM. LolP catalyzes hydroxylation of the methyl group in N-methylloline (NML) and further oxygenation to N-formylloline (NFL). A plant acetyltransferase is responsible for the acetylation of loline to form N-acetylloline (NAL). LolA might interact with aspartate kinase to prevent feedback inhibition of its activity by these end products and thereby promote production of L-homoserine from L-aspartate. In Epichloe uncinata (Endophyte fungus), this protein is Inactive cytochrome P450 monooxygenase lolP2.